A 386-amino-acid chain; its full sequence is Acetylornithine aminotransferase (386 aa).

Residues 96–97 (GA) and phenylalanine 123 contribute to the pyridoxal 5'-phosphate site. Arginine 126 is a N(2)-acetyl-L-ornithine binding site. A pyridoxal 5'-phosphate-binding site is contributed by 208 to 211 (DEVQ). Lysine 237 is modified (N6-(pyridoxal phosphate)lysine). Serine 265 contributes to the N(2)-acetyl-L-ornithine binding site. Threonine 266 contributes to the pyridoxal 5'-phosphate binding site.

Belongs to the class-III pyridoxal-phosphate-dependent aminotransferase family. ArgD subfamily. As to quaternary structure, homodimer. It depends on pyridoxal 5'-phosphate as a cofactor.

Its subcellular location is the cytoplasm. It catalyses the reaction N(2)-acetyl-L-ornithine + 2-oxoglutarate = N-acetyl-L-glutamate 5-semialdehyde + L-glutamate. It functions in the pathway amino-acid biosynthesis; L-arginine biosynthesis; N(2)-acetyl-L-ornithine from L-glutamate: step 4/4. The chain is Acetylornithine aminotransferase from Bacillus cereus (strain ATCC 14579 / DSM 31 / CCUG 7414 / JCM 2152 / NBRC 15305 / NCIMB 9373 / NCTC 2599 / NRRL B-3711).